The chain runs to 156 residues: Ribosomal RNA large subunit methyltransferase H (156 aa).

Residues leucine 73, glycine 104, and 123–128 (IGPLTL) contribute to the S-adenosyl-L-methionine site.

The protein belongs to the RNA methyltransferase RlmH family. Homodimer.

It is found in the cytoplasm. It catalyses the reaction pseudouridine(1915) in 23S rRNA + S-adenosyl-L-methionine = N(3)-methylpseudouridine(1915) in 23S rRNA + S-adenosyl-L-homocysteine + H(+). Functionally, specifically methylates the pseudouridine at position 1915 (m3Psi1915) in 23S rRNA. This chain is Ribosomal RNA large subunit methyltransferase H, found in Xanthomonas oryzae pv. oryzae (strain MAFF 311018).